We begin with the raw amino-acid sequence, 829 residues long: Venom phosphodiesterase CdcPDE (829 aa).

2 SMB domains span residues 8–51 (PQVS…VLPT) and 52–96 (QSWS…GETS). 16 disulfide bridges follow: C12-C16, C12-C29, C16-C47, C27-C29, C27-C40, C33-C39, C40-C47, C56-C61, C56-C73, C61-C91, C71-C73, C71-C84, C77-C83, C84-C91, C102-C148, and C110-C322. Residue N17 is glycosylated (N-linked (GlcNAc...) asparagine). Residues 36–38 (RQA) carry the Cell attachment site motif. A divalent metal cation is bound by residues D125 and T163. T163 functions as the AMP-threonine intermediate in the catalytic mechanism. 2 N-linked (GlcNAc...) asparagine glycosylation sites follow: N194 and N237. K249 is an AMP binding site. Residues D283, H287, D330, and H331 each contribute to the a divalent metal cation site. Position 287 (H287) interacts with AMP. Disulfide bonds link C338–C435, C386–C771, C519–C577, C532–C632, C534–C617, and C740–C750. N383 carries an N-linked (GlcNAc...) asparagine glycan. Residue H440 coordinates a divalent metal cation. N-linked (GlcNAc...) asparagine glycosylation is found at N572 and N652.

Belongs to the nucleotide pyrophosphatase/phosphodiesterase family. As to quaternary structure, monomer. A divalent metal cation is required as a cofactor. N-glycosylated. Glycosylation counts for an increased mass of ~9%. Post-translationally, contains 16 disulfide bonds. In terms of tissue distribution, expressed by venom gland.

Its subcellular location is the secreted. The catalysed reaction is ADP + H2O = AMP + phosphate + H(+). Its function is as follows. Hydrolyzes ADP with high activity. Shows weak or no activity on 5'-AMP, 5'-GMP, 3'-AMP, ATP, cAMP, and cGMP. Is devoid of monophosphatase and proteinase activities. Inhibits ADP-induced platelet aggregation and is cytotoxic to human keratinocytes. Kinetic parameters indicated a higher affinity for the substrate bis(p-nitrophenyl) phosphate compared to others snake venom PDEs. Is recognized by the crotalid antivenom produced by the Instituto Butantan. The sequence is that of Venom phosphodiesterase CdcPDE from Crotalus durissus collilineatus (Brazilian rattlesnake).